The chain runs to 1141 residues: DNA-directed RNA polymerase subunit beta (1141 aa).

It belongs to the RNA polymerase beta chain family. As to quaternary structure, the RNAP catalytic core consists of 2 alpha, 1 beta, 1 beta' and 1 omega subunit. When a sigma factor is associated with the core the holoenzyme is formed, which can initiate transcription.

The enzyme catalyses RNA(n) + a ribonucleoside 5'-triphosphate = RNA(n+1) + diphosphate. In terms of biological role, DNA-dependent RNA polymerase catalyzes the transcription of DNA into RNA using the four ribonucleoside triphosphates as substrates. The chain is DNA-directed RNA polymerase subunit beta from Parafrankia sp. (strain EAN1pec).